Here is a 206-residue protein sequence, read N- to C-terminus: Large ribosomal subunit protein uL4 (206 aa).

The disordered stretch occupies residues 45–76 (RQGNQSAKTRAEVSGGGKKPWRQKGTGRARQG).

Belongs to the universal ribosomal protein uL4 family. Part of the 50S ribosomal subunit.

One of the primary rRNA binding proteins, this protein initially binds near the 5'-end of the 23S rRNA. It is important during the early stages of 50S assembly. It makes multiple contacts with different domains of the 23S rRNA in the assembled 50S subunit and ribosome. In terms of biological role, forms part of the polypeptide exit tunnel. In Clostridium novyi (strain NT), this protein is Large ribosomal subunit protein uL4.